The sequence spans 620 residues: Endoglucanase 10 (620 aa).

The tract at residues 1 to 26 (MFGRDPWGGPLEISNADSATDDDRSR) is disordered. The helical; Signal-anchor for type II membrane protein transmembrane segment at 72-92 (IFMWTVGTILGVGLFIGFVMM) threads the bilayer. Asp-165 (nucleophile) is an active-site residue. N-linked (GlcNAc...) asparagine glycosylation is found at Asn-216, Asn-314, Asn-323, Asn-344, Asn-408, and Asn-425. Active-site residues include His-513 and Asp-561. N-linked (GlcNAc...) asparagine glycosylation occurs at Asn-567. Residue Glu-570 is part of the active site.

It belongs to the glycosyl hydrolase 9 (cellulase E) family. In terms of tissue distribution, ubiquitous.

Its subcellular location is the membrane. It carries out the reaction Endohydrolysis of (1-&gt;4)-beta-D-glucosidic linkages in cellulose, lichenin and cereal beta-D-glucans.. The protein is Endoglucanase 10 (GLU2) of Oryza sativa subsp. japonica (Rice).